The chain runs to 401 residues: Enolase (401 aa).

Glutamine 154 serves as a coordination point for (2R)-2-phosphoglycerate. Glutamate 196 serves as the catalytic Proton donor. Aspartate 232, glutamate 275, and aspartate 302 together coordinate Mg(2+). Residues lysine 327, arginine 356, serine 357, and lysine 378 each contribute to the (2R)-2-phosphoglycerate site. Lysine 327 functions as the Proton acceptor in the catalytic mechanism.

Belongs to the enolase family. It depends on Mg(2+) as a cofactor.

It is found in the cytoplasm. Its subcellular location is the secreted. The protein localises to the cell surface. The catalysed reaction is (2R)-2-phosphoglycerate = phosphoenolpyruvate + H2O. It functions in the pathway carbohydrate degradation; glycolysis; pyruvate from D-glyceraldehyde 3-phosphate: step 4/5. Catalyzes the reversible conversion of 2-phosphoglycerate (2-PG) into phosphoenolpyruvate (PEP). It is essential for the degradation of carbohydrates via glycolysis. This is Enolase from Haloarcula marismortui (strain ATCC 43049 / DSM 3752 / JCM 8966 / VKM B-1809) (Halobacterium marismortui).